A 104-amino-acid chain; its full sequence is MKNPFEAMKQLKKLQEKMAKIEEELEQTLVEGTAGGGVVKIVMTAKEEVKEVKIDPEVVNKDEVDILEDLIAAALRDALTKAKEKSAEKMGSLTDGLPLPPGLF.

Residues 84–104 (EKSAEKMGSLTDGLPLPPGLF) form a disordered region.

The protein belongs to the YbaB/EbfC family. Homodimer.

It localises to the cytoplasm. The protein resides in the nucleoid. Functionally, binds to DNA and alters its conformation. May be involved in regulation of gene expression, nucleoid organization and DNA protection. In Dictyoglomus turgidum (strain DSM 6724 / Z-1310), this protein is Nucleoid-associated protein Dtur_0258.